Here is a 362-residue protein sequence, read N- to C-terminus: Dihydroorotate dehydrogenase (quinone) (362 aa).

Residues 62-66 (AGYDK) and T86 each bind FMN. Residue K66 coordinates substrate. A substrate-binding site is contributed by 111–115 (NRLGF). N139 and N170 together coordinate FMN. N170 is a binding site for substrate. The Nucleophile role is filled by S173. N175 is a substrate binding site. FMN is bound by residues K215 and S243. 244–245 (NT) is a binding site for substrate. FMN is bound by residues G266, G295, and 316 to 317 (YS).

It belongs to the dihydroorotate dehydrogenase family. Type 2 subfamily. In terms of assembly, monomer. FMN is required as a cofactor.

It is found in the cell membrane. It catalyses the reaction (S)-dihydroorotate + a quinone = orotate + a quinol. It functions in the pathway pyrimidine metabolism; UMP biosynthesis via de novo pathway; orotate from (S)-dihydroorotate (quinone route): step 1/1. Its function is as follows. Catalyzes the conversion of dihydroorotate to orotate with quinone as electron acceptor. The chain is Dihydroorotate dehydrogenase (quinone) from Rhizobium etli (strain CIAT 652).